Reading from the N-terminus, the 674-residue chain is Putative kinase-like protein TMKL1 (674 aa).

The signal sequence occupies residues 1–25; it reads MGMEALRFLHVIFFFVLILHCHCGT. Over 26 to 295 the chain is Extracellular; that stretch reads SLSGSSDVKL…PLKPCLGSSR (270 aa). N-linked (GlcNAc...) asparagine glycans are attached at residues N57, N90, N95, and N110. LRR repeat units lie at residues 100-122, 124-146, 148-169, and 173-194; these read HLLS…IGEF, MLQS…LGYT, SLSD…SIWN, and KLVS…PALP. N-linked (GlcNAc...) asparagine glycosylation is found at N183 and N195. LRR repeat units lie at residues 200–222, 224–244, and 247–269; these read NLQV…ITRF, GVKS…EGLG, and ELES…GESK. N252 and N257 each carry an N-linked (GlcNAc...) asparagine glycan. The chain crosses the membrane as a helical span at residues 296 to 323; it reads LSPGAVAGLVIGLMSGAVVVASLLIGYL. The Cytoplasmic segment spans residues 324-674; it reads QNKKRKSSIE…ETRSDAETPF (351 aa). The segment at 331 to 350 is disordered; sequence SIESEDDLEEGDEEDEIGEK. The segment covering 333–348 has biased composition (acidic residues); the sequence is ESEDDLEEGDEEDEIG. A Phosphoserine modification is found at S334. The Protein kinase domain maps to 373 to 674; the sequence is NATGQVMEKT…ETRSDAETPF (302 aa). Residue T375 is modified to Phosphothreonine. S454 carries the post-translational modification Phosphoserine. Positions 649–674 are disordered; that stretch reads LEENRPRNRSALYSPTETRSDAETPF.

Belongs to the protein kinase superfamily.

The protein localises to the membrane. Does not seem to have conserved a kinase activity. The chain is Putative kinase-like protein TMKL1 (TMKL1) from Arabidopsis thaliana (Mouse-ear cress).